We begin with the raw amino-acid sequence, 460 residues long: UDP-N-acetylmuramate--L-alanine ligase (460 aa).

118 to 124 serves as a coordination point for ATP; the sequence is GAHGKTT.

Belongs to the MurCDEF family.

It is found in the cytoplasm. It carries out the reaction UDP-N-acetyl-alpha-D-muramate + L-alanine + ATP = UDP-N-acetyl-alpha-D-muramoyl-L-alanine + ADP + phosphate + H(+). Its pathway is cell wall biogenesis; peptidoglycan biosynthesis. Cell wall formation. The chain is UDP-N-acetylmuramate--L-alanine ligase from Clostridium botulinum (strain Eklund 17B / Type B).